A 256-amino-acid chain; its full sequence is Probable transcriptional regulatory protein cce_0894 (256 aa).

It belongs to the TACO1 family.

The protein resides in the cytoplasm. In Crocosphaera subtropica (strain ATCC 51142 / BH68) (Cyanothece sp. (strain ATCC 51142)), this protein is Probable transcriptional regulatory protein cce_0894.